We begin with the raw amino-acid sequence, 478 residues long: Transposase for insertion sequence element IS231E (478 aa).

Belongs to the transposase 11 family.

Involved in the transposition of the insertion sequence. The chain is Transposase for insertion sequence element IS231E from Bacillus thuringiensis subsp. finitimus.